A 37-amino-acid polypeptide reads, in one-letter code: Small ribosomal subunit protein uS19 (37 aa).

The protein belongs to the universal ribosomal protein uS19 family.

This chain is Small ribosomal subunit protein uS19 (RPS15), found in Helix lucorum (Snail).